The following is a 400-amino-acid chain: MQLLHHAQLVTMDEESGGYGLIEQGALVIEAGRISWIGPETDLPAQYADATRRDLGGRLVTPGLIDCHTHIVFGGDRAREFEMRLEGASYEEIARAGGGILSSVRATREADEEALLAAALPRVDTLLAEGVTTLEIKSGYGLDIDSELKMLRVARRVGQLRKVTVRTTWLAAHALPPEYKDDRAGYIREVVIAGMERGHAEGLIDAVDGFCEGIAFTREEMAGIFDHAAKLGLPVKLHAEQLSDLGGAAMAARHGALSADHLEYLGQDGIEAMAASGTVAVLLPGAFYTLRETQYPPMAALRDAGVPIALATDCNPGTSPLTSLLLTMNMGATLFRMTPSECLAGVTRHAARALGLKDRGRLTPGMRADLAVWDIRHPAELTYRIGFNPLHARIVGGELV.

Residues histidine 68 and histidine 70 each coordinate Fe(3+). Zn(2+) is bound by residues histidine 68 and histidine 70. Positions 77, 140, and 173 each coordinate 4-imidazolone-5-propanoate. N-formimidoyl-L-glutamate is bound at residue tyrosine 140. Fe(3+) is bound at residue histidine 238. Histidine 238 lines the Zn(2+) pocket. Glutamine 241 is a binding site for 4-imidazolone-5-propanoate. Aspartate 313 serves as a coordination point for Fe(3+). Aspartate 313 provides a ligand contact to Zn(2+). N-formimidoyl-L-glutamate contacts are provided by asparagine 315 and glycine 317. Threonine 318 provides a ligand contact to 4-imidazolone-5-propanoate.

This sequence belongs to the metallo-dependent hydrolases superfamily. HutI family. It depends on Zn(2+) as a cofactor. Requires Fe(3+) as cofactor.

Its subcellular location is the cytoplasm. The catalysed reaction is 4-imidazolone-5-propanoate + H2O = N-formimidoyl-L-glutamate. The protein operates within amino-acid degradation; L-histidine degradation into L-glutamate; N-formimidoyl-L-glutamate from L-histidine: step 3/3. Functionally, catalyzes the hydrolytic cleavage of the carbon-nitrogen bond in imidazolone-5-propanoate to yield N-formimidoyl-L-glutamate. It is the third step in the universal histidine degradation pathway. This is Imidazolonepropionase from Paracoccus denitrificans (strain Pd 1222).